We begin with the raw amino-acid sequence, 453 residues long: Na(+)/H(+) antiporter NhaA 2 (453 aa).

A run of 12 helical transmembrane segments spans residues 23–43 (FLHIEAVSGIVLLIAAVAALI), 74–94 (LHFWINDGLMTIFFLVVGMEI), 111–131 (LPMAAAVGGVAVPALLYLSFG), 139–159 (GWAVPTATDIAFAVGVLALLG), 168–188 (VFLLALAIIDDIIAVLIIAFF), 191–211 (GGLDYTGFGVALIGLLMVIGL), 214–234 (IGVGSAYAYVLPGAIVWLGIL), 235–255 (LTGAHPTLAGVVLGLMTPVTA), 316–336 (VAFGIMPVFALANAGVSLSGV), 345–365 (WVMIAVAVALVAGKPLGIVSV), 386–406 (IVLVGLLAGIGFTMSIFIANL), and 419–439 (LGVLSASLIAAVLGLTWGVWS).

This sequence belongs to the NhaA Na(+)/H(+) (TC 2.A.33) antiporter family.

The protein resides in the cell inner membrane. It catalyses the reaction Na(+)(in) + 2 H(+)(out) = Na(+)(out) + 2 H(+)(in). In terms of biological role, na(+)/H(+) antiporter that extrudes sodium in exchange for external protons. The polypeptide is Na(+)/H(+) antiporter NhaA 2 (Pseudomonas putida (strain ATCC 700007 / DSM 6899 / JCM 31910 / BCRC 17059 / LMG 24140 / F1)).